The chain runs to 243 residues: Probable 2-phosphosulfolactate phosphatase (243 aa).

The protein belongs to the ComB family. The cofactor is Mg(2+).

The enzyme catalyses (2R)-O-phospho-3-sulfolactate + H2O = (2R)-3-sulfolactate + phosphate. The protein is Probable 2-phosphosulfolactate phosphatase of Prochlorococcus marinus (strain SARG / CCMP1375 / SS120).